We begin with the raw amino-acid sequence, 300 residues long: HTH-type transcriptional regulator ArgP (300 aa).

The region spanning 4–60 is the HTH lysR-type domain; sequence PDYRTLQALDAVIRERGFERAAQKLCITQSAVSQRIKQLENLFGQPLLVRTVPPRPT. The H-T-H motif DNA-binding region spans 21-40; sequence FERAAQKLCITQSAVSQRIK.

This sequence belongs to the LysR transcriptional regulatory family. In terms of assembly, homodimer.

Its function is as follows. Controls the transcription of genes involved in arginine and lysine metabolism. The sequence is that of HTH-type transcriptional regulator ArgP from Photorhabdus laumondii subsp. laumondii (strain DSM 15139 / CIP 105565 / TT01) (Photorhabdus luminescens subsp. laumondii).